Consider the following 754-residue polypeptide: 5-methyltetrahydropteroyltriglutamate--homocysteine methyltransferase (754 aa).

5-methyltetrahydropteroyltri-L-glutamate-binding positions include 17–20 and Lys117; that span reads RELK. Residues 431-433 and Glu484 contribute to the L-homocysteine site; that span reads IGS. Residues 431–433 and Glu484 contribute to the L-methionine site; that span reads IGS. Residues 515–516 and Trp561 contribute to the 5-methyltetrahydropteroyltri-L-glutamate site; that span reads RC. Residue Asp599 participates in L-homocysteine binding. Residue Asp599 coordinates L-methionine. Residue Glu605 coordinates 5-methyltetrahydropteroyltri-L-glutamate. His641, Cys643, and Glu665 together coordinate Zn(2+). His694 acts as the Proton donor in catalysis. Position 726 (Cys726) interacts with Zn(2+).

The protein belongs to the vitamin-B12 independent methionine synthase family. Zn(2+) is required as a cofactor.

The catalysed reaction is 5-methyltetrahydropteroyltri-L-glutamate + L-homocysteine = tetrahydropteroyltri-L-glutamate + L-methionine. The protein operates within amino-acid biosynthesis; L-methionine biosynthesis via de novo pathway; L-methionine from L-homocysteine (MetE route): step 1/1. Catalyzes the transfer of a methyl group from 5-methyltetrahydrofolate to homocysteine resulting in methionine formation. The protein is 5-methyltetrahydropteroyltriglutamate--homocysteine methyltransferase of Salmonella choleraesuis (strain SC-B67).